The sequence spans 901 residues: Putative receptor protein kinase CRINKLY4 (901 aa).

A signal peptide spans 1–24 (MDHVPALVLAGCCFLALLPGWACG). At 25 to 423 (LGSMSSIAVS…SRKLMAFQMR (399 aa)) the chain is on the extracellular side. A run of 7 repeats spans residues 33-68 (VSYGEDGPVFCGLNSDGSHLVACFGADASVLYGAPP), 72-107 (FLGLTAGDGFVCGLLLDTRQPYCWGSNSYVKSGVPQ), 125-160 (LCALRAAQDGGRGSSAATSLIDCWGYNMTATHAVDE), 162-195 (VSTVSAGSVFNCGLFARNRTVFCWGDETVSGVVG), 203-236 (FQSIGAGGYHVCGVLENAQVFCWGRSLEMQQVVP), 253-287 (MSTVVGGRFHACGIRSLDHQVACWGFTLHNSTSPP), and 292-330 (MYALVAGDYFTCGVPAETSLMPRCWGNSGPLALPMAVPP). Residues 33 to 330 (VSYGEDGPVF…PLALPMAVPP (298 aa)) form a 7 X 36 AA repeats region. N-linked (GlcNAc...) asparagine glycans are attached at residues Asn-151 and Asn-179. N-linked (GlcNAc...) asparagine glycosylation occurs at Asn-282. Intrachain disulfides connect Cys-338/Cys-365, Cys-368/Cys-382, and Cys-372/Cys-390. Residues 357 to 391 (CKPANSRLCLPCSTGCPEGLYESSPCNATADRVCQ) form a TNFR-Cys repeat. Asn-383 carries an N-linked (GlcNAc...) asparagine glycan. A helical transmembrane segment spans residues 424–444 (IFVAEIVFAVVLVLSVSVTTC). Residues 445 to 901 (LYVRHKLRHC…QENLYLQHNF (457 aa)) are Cytoplasmic-facing. Residues 505–712 (FSEDSQVGKG…EILSGRKAID (208 aa)) form the Protein kinase domain. Residues 511 to 519 (VGKGSFSCV) and Lys-533 contribute to the ATP site. Asp-634 functions as the Proton acceptor in the catalytic mechanism. Positions 845–876 (VTSSQRRKSSASEADIVGRRATDGRNVGSSIG) are disordered.

Belongs to the protein kinase superfamily. Ser/Thr protein kinase family. In terms of assembly, homodimer.

It is found in the cell membrane. Its subcellular location is the endosome. The protein localises to the multivesicular body membrane. It catalyses the reaction L-seryl-[protein] + ATP = O-phospho-L-seryl-[protein] + ADP + H(+). The catalysed reaction is L-threonyl-[protein] + ATP = O-phospho-L-threonyl-[protein] + ADP + H(+). Functionally, putative receptor protein kinase. Could play a role in a differentiation signal. The CRINKLY4 (CR4) mutation affects leaf epidermis differentiation such that cell size and morphology are altered, and surface functions are compromised, allowing graft-like fusions between organs. In Zea mays (Maize), this protein is Putative receptor protein kinase CRINKLY4 (CR4).